Here is a 308-residue protein sequence, read N- to C-terminus: Glycine--tRNA ligase alpha subunit (308 aa).

This sequence belongs to the class-II aminoacyl-tRNA synthetase family. Tetramer of two alpha and two beta subunits.

Its subcellular location is the cytoplasm. It catalyses the reaction tRNA(Gly) + glycine + ATP = glycyl-tRNA(Gly) + AMP + diphosphate. In Brevibacillus brevis (strain 47 / JCM 6285 / NBRC 100599), this protein is Glycine--tRNA ligase alpha subunit.